The chain runs to 204 residues: Somatotropin (204 aa).

A signal peptide spans 1–17 (MERAVLLLSLLSLGVSS). Position 18 is a pyrrolidone carboxylic acid (Gln18). His36 contributes to the Zn(2+) binding site. Cys69 and Cys177 are oxidised to a cystine. Glu186 is a Zn(2+) binding site. Residues Cys194 and Cys202 are joined by a disulfide bond.

Belongs to the somatotropin/prolactin family.

The protein resides in the secreted. In terms of biological role, growth hormone plays an important role in growth control and involved in the regulation of several anabolic processes. The polypeptide is Somatotropin (gh) (Perca flavescens (American yellow perch)).